A 350-amino-acid polypeptide reads, in one-letter code: Holliday junction branch migration complex subunit RuvB (350 aa).

The segment at Met-1 to Tyr-183 is large ATPase domain (RuvB-L). Residues Leu-22, Arg-23, Gly-64, Lys-67, Thr-68, Ser-69, Glu-130–Phe-132, Arg-173, Tyr-183, and Arg-220 contribute to the ATP site. A Mg(2+)-binding site is contributed by Thr-68. Positions Ser-184–Glu-254 are small ATPAse domain (RuvB-S). The interval Glu-257 to Phe-350 is head domain (RuvB-H). The DNA site is built by Arg-312 and Arg-317. Positions Tyr-331 to Phe-350 are disordered.

This sequence belongs to the RuvB family. In terms of assembly, homohexamer. Forms an RuvA(8)-RuvB(12)-Holliday junction (HJ) complex. HJ DNA is sandwiched between 2 RuvA tetramers; dsDNA enters through RuvA and exits via RuvB. An RuvB hexamer assembles on each DNA strand where it exits the tetramer. Each RuvB hexamer is contacted by two RuvA subunits (via domain III) on 2 adjacent RuvB subunits; this complex drives branch migration. In the full resolvosome a probable DNA-RuvA(4)-RuvB(12)-RuvC(2) complex forms which resolves the HJ.

Its subcellular location is the cytoplasm. The catalysed reaction is ATP + H2O = ADP + phosphate + H(+). In terms of biological role, the RuvA-RuvB-RuvC complex processes Holliday junction (HJ) DNA during genetic recombination and DNA repair, while the RuvA-RuvB complex plays an important role in the rescue of blocked DNA replication forks via replication fork reversal (RFR). RuvA specifically binds to HJ cruciform DNA, conferring on it an open structure. The RuvB hexamer acts as an ATP-dependent pump, pulling dsDNA into and through the RuvAB complex. RuvB forms 2 homohexamers on either side of HJ DNA bound by 1 or 2 RuvA tetramers; 4 subunits per hexamer contact DNA at a time. Coordinated motions by a converter formed by DNA-disengaged RuvB subunits stimulates ATP hydrolysis and nucleotide exchange. Immobilization of the converter enables RuvB to convert the ATP-contained energy into a lever motion, pulling 2 nucleotides of DNA out of the RuvA tetramer per ATP hydrolyzed, thus driving DNA branch migration. The RuvB motors rotate together with the DNA substrate, which together with the progressing nucleotide cycle form the mechanistic basis for DNA recombination by continuous HJ branch migration. Branch migration allows RuvC to scan DNA until it finds its consensus sequence, where it cleaves and resolves cruciform DNA. This is Holliday junction branch migration complex subunit RuvB from Chloroflexus aurantiacus (strain ATCC 29366 / DSM 635 / J-10-fl).